The chain runs to 587 residues: MSKEEFMKIQTCVLKVNIHCDGCKQKVKKILQKIEGVFTTKIDAELGKVTVSGNVDPSVLIKKLLKSGKHAEIWGAPKGGSNNNQNQPNLANQFKAMQIDHGGKGGGGGGGGPANNNKGQKIGGGGGGGGGGGGGGGGGPPKMVIPQLTPQQMQQLNPQQLQQLQQLQQMKGFQDLKLPPQLKGGPGPGPGSVPMNKNPQMPNNPNQKAVKFNVPDDDDEEDFSDEFDDEFDEDDDEFDDDLEDDEFDDHPPPPNKMKPMMGGGNMIMPNNMMPNMMMPNAQQMLNAHKNGGGPGPAGGKIEGKGMPFPVQMGGGGGGPGGKKGGPGGGGGNMGNQNQGGGGKNGGKGGGGHPLDGKMGGGGGGPNGNKGGGGVQMNGGPNGGKKGGGGGGGGGGGPMSGGLPPGFRPMGGGGGGGGGPQSMSMPMGGAMGGPMGSLPQMGGGPGPMSNNMQAVQGLPAMGPGGGGGGGPSAEAPPGYFQGQVSGNGGGGQDSMPGNPYLQQQQQQQQQQYLAAVMNQQRSMGNERFQPMMYARPPPAVNYMPPQPQPHQQHPYPYPYPYPPQYPPHNGDQYSDYFNDENTSSCNIM.

An HMA domain is found at 9–72 (IQTCVLKVNI…KLLKSGKHAE (64 aa)). Residues Cys-20 and Cys-23 each contribute to the a metal cation site. Disordered stretches follow at residues 98-146 (QIDH…MVIP), 176-261 (LKLP…KPMM), 287-449 (AHKN…PMSN), 462-504 (PGGG…QQQQ), and 532-587 (YARP…CNIM). Composition is skewed to gly residues over residues 104 to 113 (KGGGGGGGGP) and 121 to 140 (KIGG…GGGP). The segment covering 194–208 (PMNKNPQMPNNPNQK) has biased composition (low complexity). Residues 215–248 (PDDDDEEDFSDEFDDEFDEDDDEFDDDLEDDEFD) show a composition bias toward acidic residues. 3 stretches are compositionally biased toward gly residues: residues 290 to 300 (NGGGPGPAGGK), 312 to 419 (MGGG…GGGP), and 428 to 445 (GAMG…GGPG). Over residues 471 to 483 (SAEAPPGYFQGQV) the composition is skewed to low complexity. Pro residues-rich tracts occupy residues 534-547 (RPPP…PQPQ) and 554-565 (YPYPYPYPPQYP). A compositionally biased stretch (polar residues) spans 578–587 (DENTSSCNIM). Cys-584 is subject to Cysteine methyl ester. Cys-584 carries the S-farnesyl cysteine lipid modification. The propeptide at 585–587 (NIM) is removed in mature form.

It belongs to the HIPP family.

In terms of biological role, heavy-metal-binding protein. The protein is Heavy metal-associated isoprenylated plant protein 33 of Arabidopsis thaliana (Mouse-ear cress).